A 185-amino-acid polypeptide reads, in one-letter code: Vomeronasal secretory protein 2 (185 aa).

An N-terminal signal peptide occupies residues 1 to 19 (MKSLLLTVTLSSLVATLQT). An intrachain disulfide couples Cys-80 to Cys-172.

Belongs to the calycin superfamily. Lipocalin family. As to expression, specifically expressed in vomeronasal and posterior glands of the nasal septum, the ducts of which open into the lumen of the vomeronasal organ.

The protein resides in the secreted. In terms of biological role, transport of lipophilic molecules, possible pheromone-carrier. The sequence is that of Vomeronasal secretory protein 2 (Lcn4) from Mus musculus (Mouse).